We begin with the raw amino-acid sequence, 165 residues long: MHCPFCRHPDSRVVDSREADEGQAIRRRRSCPECGRRFTTVETAVLSVVKRSGVTEPFSREKVVKGVRRACQGRQVDNDSLNLLAQQVEDAVRASGSAEIPSNEVGLAILDPLRNLDEVAYLRFASVYKSFSSAADFEREITDMREHAETRAADKASGAETVSVD.

Residues 3–34 (CPFCRHPDSRVVDSREADEGQAIRRRRSCPEC) fold into a zinc finger. The region spanning 46-136 (LSVVKRSGVT…VYKSFSSAAD (91 aa)) is the ATP-cone domain.

Belongs to the NrdR family. Requires Zn(2+) as cofactor.

Its function is as follows. Negatively regulates transcription of bacterial ribonucleotide reductase nrd genes and operons by binding to NrdR-boxes. This is Transcriptional repressor NrdR from Rhodococcus erythropolis (strain PR4 / NBRC 100887).